The following is a 137-amino-acid chain: Large ribosomal subunit protein uL16 (137 aa).

The protein belongs to the universal ribosomal protein uL16 family. In terms of assembly, part of the 50S ribosomal subunit.

Its function is as follows. Binds 23S rRNA and is also seen to make contacts with the A and possibly P site tRNAs. This chain is Large ribosomal subunit protein uL16, found in Streptococcus thermophilus (strain CNRZ 1066).